Consider the following 485-residue polypeptide: UDP-N-acetylmuramoyl-L-alanyl-D-glutamate--2,6-diaminopimelate ligase (485 aa).

S28 serves as a coordination point for UDP-N-acetyl-alpha-D-muramoyl-L-alanyl-D-glutamate. 108 to 114 (GTNGKTS) provides a ligand contact to ATP. UDP-N-acetyl-alpha-D-muramoyl-L-alanyl-D-glutamate-binding positions include N147, 148 to 149 (TT), S175, and R183. The residue at position 215 (K215) is an N6-carboxylysine. Meso-2,6-diaminopimelate contacts are provided by residues R374, 398 to 401 (DNPR), G449, and E453. The Meso-diaminopimelate recognition motif motif lies at 398-401 (DNPR).

This sequence belongs to the MurCDEF family. MurE subfamily. Mg(2+) is required as a cofactor. Carboxylation is probably crucial for Mg(2+) binding and, consequently, for the gamma-phosphate positioning of ATP.

It is found in the cytoplasm. It carries out the reaction UDP-N-acetyl-alpha-D-muramoyl-L-alanyl-D-glutamate + meso-2,6-diaminopimelate + ATP = UDP-N-acetyl-alpha-D-muramoyl-L-alanyl-gamma-D-glutamyl-meso-2,6-diaminopimelate + ADP + phosphate + H(+). It functions in the pathway cell wall biogenesis; peptidoglycan biosynthesis. In terms of biological role, catalyzes the addition of meso-diaminopimelic acid to the nucleotide precursor UDP-N-acetylmuramoyl-L-alanyl-D-glutamate (UMAG) in the biosynthesis of bacterial cell-wall peptidoglycan. This Fusobacterium nucleatum subsp. nucleatum (strain ATCC 25586 / DSM 15643 / BCRC 10681 / CIP 101130 / JCM 8532 / KCTC 2640 / LMG 13131 / VPI 4355) protein is UDP-N-acetylmuramoyl-L-alanyl-D-glutamate--2,6-diaminopimelate ligase.